We begin with the raw amino-acid sequence, 148 residues long: Large ribosomal subunit protein bL27m (148 aa).

A mitochondrion-targeting transit peptide spans 1-30 (MAAAALTLRTRAAVTALLSPTAPTALAVRH). The disordered stretch occupies residues 28 to 48 (VRHASKKTGGSSKNLGGKSRG).

Belongs to the bacterial ribosomal protein bL27 family. Component of the mitochondrial ribosome large subunit (39S) which comprises a 16S rRNA and about 50 distinct proteins.

The protein resides in the mitochondrion. This is Large ribosomal subunit protein bL27m (Mrpl27) from Mus musculus (Mouse).